A 390-amino-acid chain; its full sequence is Protein AC109 (390 aa).

The protein resides in the host cytoplasm. It is found in the host nucleus. Its function is as follows. Plays a role in the transport of the budded virion (BV) to the host nucleus and for occlusion of viral progeny. The chain is Protein AC109 (ORF109) from Lepidoptera (butterflies and moths).